A 183-amino-acid chain; its full sequence is MIDREGYRPNVGIILCNARNQVFWGKRVNQHAWQFPQGGINAGETPEQAMFRELEEEVGLLPGHVRILGRTREWLRYDVPPHWTRRDNRGLYRGQKQIWFLLRLTGRDCDVSLRASAHPEFDAWRWNEYWVPMEAVVDFKREVYRLALEELERYLHRDLRYLRQHTRRPGERREVPFDLQLKP.

In terms of domain architecture, Nudix hydrolase spans 6–149 (GYRPNVGIIL…KREVYRLALE (144 aa)). The Nudix box motif lies at 38–59 (GGINAGETPEQAMFRELEEEVG).

Belongs to the Nudix hydrolase family. RppH subfamily. It depends on a divalent metal cation as a cofactor.

Accelerates the degradation of transcripts by removing pyrophosphate from the 5'-end of triphosphorylated RNA, leading to a more labile monophosphorylated state that can stimulate subsequent ribonuclease cleavage. The sequence is that of RNA pyrophosphohydrolase from Thiobacillus denitrificans (strain ATCC 25259 / T1).